We begin with the raw amino-acid sequence, 645 residues long: Meiosis induction protein kinase IME2/SME1 (645 aa).

The tract at residues 1 to 24 (MVEKRSRQSSSSGSEFSVPPDVDN) is disordered. Residues 8 to 17 (QSSSSGSEFS) are compositionally biased toward low complexity. The 349-residue stretch at 38–386 (YQLIEKLGAG…AQELCEMPFF (349 aa)) folds into the Protein kinase domain. ATP is bound by residues 44 to 52 (LGAGSFGCV) and lysine 67. Residue aspartate 193 is the Proton acceptor of the active site.

It belongs to the protein kinase superfamily. Ser/Thr protein kinase family.

The enzyme catalyses L-seryl-[protein] + ATP = O-phospho-L-seryl-[protein] + ADP + H(+). The catalysed reaction is L-threonyl-[protein] + ATP = O-phospho-L-threonyl-[protein] + ADP + H(+). Functionally, protein kinase which is essential for the initiation of meiosis and sporulation. The protein is Meiosis induction protein kinase IME2/SME1 (IME2) of Saccharomyces cerevisiae (strain ATCC 204508 / S288c) (Baker's yeast).